Reading from the N-terminus, the 155-residue chain is SsrA-binding protein (155 aa).

Belongs to the SmpB family.

It is found in the cytoplasm. Its function is as follows. Required for rescue of stalled ribosomes mediated by trans-translation. Binds to transfer-messenger RNA (tmRNA), required for stable association of tmRNA with ribosomes. tmRNA and SmpB together mimic tRNA shape, replacing the anticodon stem-loop with SmpB. tmRNA is encoded by the ssrA gene; the 2 termini fold to resemble tRNA(Ala) and it encodes a 'tag peptide', a short internal open reading frame. During trans-translation Ala-aminoacylated tmRNA acts like a tRNA, entering the A-site of stalled ribosomes, displacing the stalled mRNA. The ribosome then switches to translate the ORF on the tmRNA; the nascent peptide is terminated with the 'tag peptide' encoded by the tmRNA and targeted for degradation. The ribosome is freed to recommence translation, which seems to be the essential function of trans-translation. This Bacillus mycoides (strain KBAB4) (Bacillus weihenstephanensis) protein is SsrA-binding protein.